A 170-amino-acid polypeptide reads, in one-letter code: Peptide deformylase 2 (170 aa).

The Fe cation site is built by C94 and H136. The active site involves E137. Residue H140 coordinates Fe cation.

The protein belongs to the polypeptide deformylase family. Fe(2+) is required as a cofactor.

The catalysed reaction is N-terminal N-formyl-L-methionyl-[peptide] + H2O = N-terminal L-methionyl-[peptide] + formate. Its function is as follows. Removes the formyl group from the N-terminal Met of newly synthesized proteins. Requires at least a dipeptide for an efficient rate of reaction. N-terminal L-methionine is a prerequisite for activity but the enzyme has broad specificity at other positions. In Xanthomonas axonopodis pv. citri (strain 306), this protein is Peptide deformylase 2.